A 96-amino-acid chain; its full sequence is Glycine-rich protein DC7.1 (96 aa).

Positions 1–25 (MGSKIFLLLGLSIAFALLISSEVAA) are cleaved as a signal peptide. Residues 29-66 (SETTTEGASLDGGHHGGGGGGHYSGGGGHGGSHHGGGG) are disordered. Repeat copies occupy residues 42-50 (HHGGGGGGH) and 61-67 (HHGGGGH). The tract at residues 42–67 (HHGGGGGGHYSGGGGHGGSHHGGGGH) is 2 approximate repeats of H-H-G(4,6)-H. Gly residues predominate over residues 43–66 (HGGGGGGHYSGGGGHGGSHHGGGG).

This sequence belongs to the GRP family.

Its function is as follows. May be connected with the initiation of embryogenesis or with the metabolic changes produced by the removal of auxins. The protein is Glycine-rich protein DC7.1 of Daucus carota (Wild carrot).